Consider the following 312-residue polypeptide: Small kinetochore-associated protein (312 aa).

Residues 1–13 (MATHKAEAQETDF) are compositionally biased toward basic and acidic residues. Disordered stretches follow at residues 1–32 (MATH…PSSR), 55–176 (LKRS…KDKN), and 221–242 (KGLN…DPTD). Over residues 75–84 (RPTTMASSKT) the composition is skewed to polar residues. Composition is skewed to basic and acidic residues over residues 131–143 (DVTK…RENG) and 166–176 (QKPEEDLKDKN). The segment at 156 to 312 (IRSSYKPLSK…LEEMEQLLEM (157 aa)) is interaction with SPAG5. The stretch at 169–210 (EEDLKDKNELLEAVNKQLHQKLTETQGELKDLTQKVELLEKF) forms a coiled coil. A coiled-coil region spans residues 246 to 288 (LLETLKDELKLFNETAKKQMEELQALKVKLKLKEKERIQFLEQ).

As to quaternary structure, part of an astrin (SPAG5)-kinastrin (SKAP) complex containing KNSTRN, SPAG5, PLK1, DYNLL1 and SGO2. Interacts with SPAG5. Directly binds to microtubules, although at relatively low affinity. Interacts with CENPE; this interaction greatly favors microtubule-binding. Interacts with DSN1/MIS13; leading to localization to kinetochores. Interacts with MAPRE1/EB1; leading to localization to the microtubule plus ends. Interacts with PRPF19. Interacts with DYNLL1. Interacts with MAP4.

The protein localises to the nucleus. It localises to the chromosome. The protein resides in the centromere. Its subcellular location is the kinetochore. It is found in the cytoplasm. The protein localises to the cytoskeleton. It localises to the spindle pole. The protein resides in the microtubule organizing center. Its function is as follows. Essential component of the mitotic spindle required for faithful chromosome segregation and progression into anaphase. Promotes the metaphase-to-anaphase transition and is required for chromosome alignment, normal timing of sister chromatid segregation, and maintenance of spindle pole architecture. The astrin (SPAG5)-kinastrin (SKAP) complex promotes stable microtubule-kinetochore attachments. Required for kinetochore oscillations and dynamics of microtubule plus-ends during live cell mitosis, possibly by forming a link between spindle microtubule plus-ends and mitotic chromosomes to achieve faithful cell division. In Rattus norvegicus (Rat), this protein is Small kinetochore-associated protein (Knstrn).